Reading from the N-terminus, the 595-residue chain is Beta-(1--&gt;2)glucan export ATP-binding/permease protein NdvA (595 aa).

The region spanning S21–S301 is the ABC transmembrane type-1 domain. The next 5 helical transmembrane spans lie at L22–F42, I55–L75, A128–I148, F152–I172, and T248–G268. Positions V335–A569 constitute an ABC transporter domain. ATP is bound at residue G368–T375.

The protein belongs to the ABC transporter superfamily. Beta-(1--&gt;2)glucan exporter (TC 3.A.1.108.1) family. As to quaternary structure, homodimer.

The protein resides in the cell inner membrane. The enzyme catalyses [(1-&gt;2)-beta-D-glucosyl](n)(in) + ATP + H2O = [(1-&gt;2)-beta-D-glucosyl](n)(out) + ADP + phosphate + H(+). In terms of biological role, involved in beta-(1--&gt;2)glucan export. Transmembrane domains (TMD) form a pore in the inner membrane and the ATP-binding domain (NBD) is responsible for energy generation. This chain is Beta-(1--&gt;2)glucan export ATP-binding/permease protein NdvA, found in Bartonella quintana (strain Toulouse) (Rochalimaea quintana).